A 321-amino-acid polypeptide reads, in one-letter code: Cytochrome f (321 aa).

A signal peptide spans M1 to A38. Y39, C59, C62, and H63 together coordinate heme. The helical transmembrane segment at V288–K308 threads the bilayer.

The protein belongs to the cytochrome f family. As to quaternary structure, the 4 large subunits of the cytochrome b6-f complex are cytochrome b6, subunit IV (17 kDa polypeptide, PetD), cytochrome f and the Rieske protein, while the 4 small subunits are PetG, PetL, PetM and PetN. The complex functions as a dimer. Requires heme as cofactor.

The protein localises to the cellular thylakoid membrane. Functionally, component of the cytochrome b6-f complex, which mediates electron transfer between photosystem II (PSII) and photosystem I (PSI), cyclic electron flow around PSI, and state transitions. The polypeptide is Cytochrome f (Prochlorococcus marinus (strain NATL2A)).